The following is a 225-amino-acid chain: Acidic leucine-rich nuclear phosphoprotein 32-related protein 2 (225 aa).

3 LRR repeats span residues K39–P60, A61–I82, and E87–K107. In terms of domain architecture, LRRCT spans S121–E161. Over residues E155–G175 the composition is skewed to acidic residues. The tract at residues E155–E225 is disordered.

This sequence belongs to the ANP32 family.

This is Acidic leucine-rich nuclear phosphoprotein 32-related protein 2 from Caenorhabditis elegans.